We begin with the raw amino-acid sequence, 292 residues long: Elongation factor Ts (292 aa).

An involved in Mg(2+) ion dislocation from EF-Tu region spans residues 80–83 (TDFV).

The protein belongs to the EF-Ts family.

The protein resides in the cytoplasm. In terms of biological role, associates with the EF-Tu.GDP complex and induces the exchange of GDP to GTP. It remains bound to the aminoacyl-tRNA.EF-Tu.GTP complex up to the GTP hydrolysis stage on the ribosome. In Cupriavidus taiwanensis (strain DSM 17343 / BCRC 17206 / CCUG 44338 / CIP 107171 / LMG 19424 / R1) (Ralstonia taiwanensis (strain LMG 19424)), this protein is Elongation factor Ts.